The chain runs to 194 residues: Peptidyl-tRNA hydrolase (194 aa).

Residue Y17 coordinates tRNA. The active-site Proton acceptor is H22. The tRNA site is built by Y68, N70, and N116.

Belongs to the PTH family. As to quaternary structure, monomer.

Its subcellular location is the cytoplasm. It catalyses the reaction an N-acyl-L-alpha-aminoacyl-tRNA + H2O = an N-acyl-L-amino acid + a tRNA + H(+). Hydrolyzes ribosome-free peptidyl-tRNAs (with 1 or more amino acids incorporated), which drop off the ribosome during protein synthesis, or as a result of ribosome stalling. Its function is as follows. Catalyzes the release of premature peptidyl moieties from peptidyl-tRNA molecules trapped in stalled 50S ribosomal subunits, and thus maintains levels of free tRNAs and 50S ribosomes. The polypeptide is Peptidyl-tRNA hydrolase (Pseudomonas fluorescens (strain ATCC BAA-477 / NRRL B-23932 / Pf-5)).